Reading from the N-terminus, the 351-residue chain is UDP-N-acetylglucosamine--N-acetylmuramyl-(pentapeptide) pyrophosphoryl-undecaprenol N-acetylglucosamine transferase (351 aa).

UDP-N-acetyl-alpha-D-glucosamine contacts are provided by residues 13–15 (TGG), N125, R161, S189, I241, 260–265 (ALTVCE), and Q285.

This sequence belongs to the glycosyltransferase 28 family. MurG subfamily.

The protein resides in the cell inner membrane. The catalysed reaction is di-trans,octa-cis-undecaprenyl diphospho-N-acetyl-alpha-D-muramoyl-L-alanyl-D-glutamyl-meso-2,6-diaminopimeloyl-D-alanyl-D-alanine + UDP-N-acetyl-alpha-D-glucosamine = di-trans,octa-cis-undecaprenyl diphospho-[N-acetyl-alpha-D-glucosaminyl-(1-&gt;4)]-N-acetyl-alpha-D-muramoyl-L-alanyl-D-glutamyl-meso-2,6-diaminopimeloyl-D-alanyl-D-alanine + UDP + H(+). Its pathway is cell wall biogenesis; peptidoglycan biosynthesis. Its function is as follows. Cell wall formation. Catalyzes the transfer of a GlcNAc subunit on undecaprenyl-pyrophosphoryl-MurNAc-pentapeptide (lipid intermediate I) to form undecaprenyl-pyrophosphoryl-MurNAc-(pentapeptide)GlcNAc (lipid intermediate II). The protein is UDP-N-acetylglucosamine--N-acetylmuramyl-(pentapeptide) pyrophosphoryl-undecaprenol N-acetylglucosamine transferase of Haemophilus influenzae (strain PittEE).